The sequence spans 71 residues: Small ribosomal subunit protein bS21 (71 aa).

The protein belongs to the bacterial ribosomal protein bS21 family.

The polypeptide is Small ribosomal subunit protein bS21 (Shewanella amazonensis (strain ATCC BAA-1098 / SB2B)).